Consider the following 183-residue polypeptide: Putative manganese efflux pump MntP (183 aa).

The next 6 membrane-spanning stretches (helical) occupy residues 8–28, 39–59, 68–88, 108–128, 133–153, and 162–182; these read MIAL…VALG, IFYI…VGMA, FGSI…GQMI, LFFA…LGIF, MATI…GLLV, and GSYS…KLLF.

This sequence belongs to the MntP (TC 9.B.29) family.

The protein localises to the cell membrane. Functionally, probably functions as a manganese efflux pump. This Geobacillus thermodenitrificans (strain NG80-2) protein is Putative manganese efflux pump MntP.